The chain runs to 60 residues: Large ribosomal subunit protein uL30 (60 aa).

It belongs to the universal ribosomal protein uL30 family. Part of the 50S ribosomal subunit.

The protein is Large ribosomal subunit protein uL30 of Limosilactobacillus reuteri (strain DSM 20016) (Lactobacillus reuteri).